We begin with the raw amino-acid sequence, 89 residues long: OMEGA-ectatommitoxin(02)-Rm1b (89 aa).

Residues 1 to 30 form the signal peptide; that stretch reads MKDSYISIVIAYLMVTFILVSSMPIEGEKG. Disulfide bonds link C39/C52, C47/C68, and C70/C79. In terms of domain architecture, EGF-like spans 43–80; it reads YANYCFNGKCVHFVAQDEPGKPCYSCICDKFYIGKRCG.

The protein belongs to the EGF domain peptide family. As to expression, expressed by the venom gland.

The protein resides in the secreted. Ant peptide with probable defensive activity which acts as a potent agonist of the mammalian epidermal growth factor receptor (EGFR). Mimics, both structurally and functionally, vertebrate epidermal growth factor (EGF) peptide hormones. In vivo, intraplantar injection in mice causes long-lasting (several days) hypersensitivity of the injected paw to both mechanical and thermal stimuli. Its long-lasting effect is unusual for venom toxins whose effects are usually immediate. One possible explanation is that it would reduce the duration of a nest attack, discourage future attacks, or enhance the actions of subsequent exposure to other pain-inducing venom peptides. The polypeptide is OMEGA-ectatommitoxin(02)-Rm1b (Rhytidoponera metallica (Australian green-headed ant)).